An 87-amino-acid chain; its full sequence is Kappa-5-bungarotoxin (87 aa).

Residues 1-21 (MKTLLLTLVVVTIVCLDLGYT) form the signal peptide. 5 disulfides stabilise this stretch: Cys-24/Cys-42, Cys-35/Cys-63, Cys-48/Cys-52, Cys-67/Cys-79, and Cys-80/Cys-85.

This sequence belongs to the three-finger toxin family. Long-chain subfamily. Kappa-neurotoxin sub-subfamily. In terms of assembly, homo- and heterodimer; non-covalently linked. As to expression, expressed by the venom gland.

The protein localises to the secreted. Functionally, postsynaptic neurotoxin that binds and inhibits neuronal nicotinic acetylcholine receptors (nAChR) with high affinity (IC(50)&lt;100 nM). Is a selective, and slowly reversible antagonist of alpha-3/CHRNA3-containing and some alpha-4/CHRNA4-containing AChRs. The polypeptide is Kappa-5-bungarotoxin (Bungarus multicinctus (Many-banded krait)).